The sequence spans 37 residues: Large ribosomal subunit protein bL36c (37 aa).

Belongs to the bacterial ribosomal protein bL36 family.

It is found in the plastid. The protein resides in the chloroplast. The protein is Large ribosomal subunit protein bL36c (rpl36) of Nephroselmis olivacea (Green alga).